An 844-amino-acid polypeptide reads, in one-letter code: E3 ubiquitin-protein ligase BRE1-like 2 (844 aa).

Coiled-coil stretches lie at residues Met1 to Gln38 and Glu160 to Thr240. The tract at residues Ser244 to Gly269 is disordered. Residues Leu245–Asp261 are compositionally biased toward polar residues. 2 coiled-coil regions span residues Glu290–Glu604 and Lys640–Lys670. The RING-type zinc-finger motif lies at Cys792 to Gly831.

The protein belongs to the BRE1 family.

The protein resides in the nucleus. The catalysed reaction is S-ubiquitinyl-[E2 ubiquitin-conjugating enzyme]-L-cysteine + [acceptor protein]-L-lysine = [E2 ubiquitin-conjugating enzyme]-L-cysteine + N(6)-ubiquitinyl-[acceptor protein]-L-lysine.. Its pathway is protein modification; protein ubiquitination. Its function is as follows. E3 ubiquitin-protein ligase that monoubiquitinates H2B to form H2BK143ub1. H2BK143ub1 gives a specific tag for epigenetic transcriptional activation and is also prerequisite for H3K4me and maybe H3K79me. It thereby plays a central role in histone code and gene regulation. Forms a ubiquitin ligase complex in cooperation with the E2 enzyme UBC2/RAD6. This Oryza sativa subsp. indica (Rice) protein is E3 ubiquitin-protein ligase BRE1-like 2 (BRE1B).